Here is a 409-residue protein sequence, read N- to C-terminus: Mitochondrial inner membrane protein oxa1-2 (409 aa).

Residues 76-96 (VVYTPSLPLSSSVLASFSFLP) traverse the membrane as a helical segment. The Mitochondrial intermembrane portion of the chain corresponds to 97–114 (HNILQNGLNTLHIWSGLP). A helical membrane pass occupies residues 115–135 (WWASIAACAVAMRIAVFPIML). The Mitochondrial matrix segment spans residues 136-188 (KMMKTSAKLAIINPKVAEHMSVLSKAKAEGNSELMMQATTQIQNLYKVNNVNP). A helical membrane pass occupies residues 189-209 (LNLLSAPVFQGILFISFFYAL). Over 210 to 235 (KTMAGVPVEGFTDGGFWWVNDLSQPD) the chain is Mitochondrial intermembrane. A helical transmembrane segment spans residues 236–256 (PLHIFPVANGLLMLLNIELGS). The Mitochondrial matrix segment spans residues 257–275 (ETGSNKVAMSPSMKKFFRF). The helical transmembrane segment at 276 to 296 (LCLASPLFTMNFPMAIFMYWF) threads the bilayer. Residues 297–409 (PSNVFSVFQG…SVTKPTEKKD (113 aa)) lie on the Mitochondrial intermembrane side of the membrane. The segment at 369 to 409 (TDTNNEQKPTNNSTITKATTLSDNSQNDKSSSVTKPTEKKD) is disordered. Residues 374–403 (EQKPTNNSTITKATTLSDNSQNDKSSSVTK) show a composition bias toward polar residues.

It belongs to the OXA1/ALB3/YidC family.

Its subcellular location is the mitochondrion inner membrane. Functionally, required for the insertion of integral membrane proteins into the mitochondrial inner membrane. Essential for the activity and assembly of cytochrome c oxidase. It is essential for viability while oxa101 is not. When both are deleted the cell is non-viable, suggesting that oxa101 act as a back-up for oxa102. In Schizosaccharomyces pombe (strain 972 / ATCC 24843) (Fission yeast), this protein is Mitochondrial inner membrane protein oxa1-2 (oxa102).